The following is a 122-amino-acid chain: Large ribosomal subunit protein uL14 (122 aa).

This sequence belongs to the universal ribosomal protein uL14 family. Part of the 50S ribosomal subunit. Forms a cluster with proteins L3 and L19. In the 70S ribosome, L14 and L19 interact and together make contacts with the 16S rRNA in bridges B5 and B8.

Its function is as follows. Binds to 23S rRNA. Forms part of two intersubunit bridges in the 70S ribosome. The chain is Large ribosomal subunit protein uL14 from Mycoplasmopsis pulmonis (strain UAB CTIP) (Mycoplasma pulmonis).